A 158-amino-acid chain; its full sequence is uncharacterized protein (158 aa).

The next 4 helical transmembrane spans lie at 12 to 32, 39 to 59, 90 to 110, and 113 to 133; these read IITLIIFVAWLFVLILIAVVV, LDILFGWMLPLPFAVLNSLSV, LIYLIPVIISFVVTPSIFNTI, and IISTLFFPILNLVLSFVWLPL.

It localises to the cell membrane. This is an uncharacterized protein from Mycoplasma genitalium (strain ATCC 33530 / DSM 19775 / NCTC 10195 / G37) (Mycoplasmoides genitalium).